We begin with the raw amino-acid sequence, 191 residues long: Shikimate kinase (191 aa).

24–29 provides a ligand contact to ATP; that stretch reads GSGKTS. Threonine 28 lines the Mg(2+) pocket. Positions 46, 70, and 92 each coordinate substrate. Position 130 (arginine 130) interacts with ATP. Position 149 (arginine 149) interacts with substrate.

Belongs to the shikimate kinase family. In terms of assembly, monomer. The cofactor is Mg(2+).

It is found in the cytoplasm. The enzyme catalyses shikimate + ATP = 3-phosphoshikimate + ADP + H(+). Its pathway is metabolic intermediate biosynthesis; chorismate biosynthesis; chorismate from D-erythrose 4-phosphate and phosphoenolpyruvate: step 5/7. In terms of biological role, catalyzes the specific phosphorylation of the 3-hydroxyl group of shikimic acid using ATP as a cosubstrate. This Parasynechococcus marenigrum (strain WH8102) protein is Shikimate kinase.